Here is a 702-residue protein sequence, read N- to C-terminus: Putative endo-beta-N-acetylglucosaminidase (702 aa).

An N-terminal signal peptide occupies residues 1-23 (MKKVRFIFLALLFFLASPEGAMA). 15 Cell wall-binding repeats span residues 42-63 (ANEW…DANY), 65-84 (ENEW…GGYM), 86-105 (KSEW…DGKM), 124-145 (IEDW…DGQH), 147-166 (EKEW…GGYL), 185-206 (QQGW…NGNY), 208-227 (DKEW…GGYM), 229-248 (ANEW…DGKI), 250-271 (EKEW…GGYM), 273-292 (ANEW…DGKM), 294-315 (EKEW…GGYM), 317-336 (ANEW…DGKI), 338-359 (EKEW…GGYM), 361-380 (ANEW…DGKM), and 382-403 (EKEW…GGYM).

Belongs to the glycosyl hydrolase 73 family.

It is found in the secreted. It carries out the reaction an N(4)-(oligosaccharide-(1-&gt;3)-[oligosaccharide-(1-&gt;6)]-beta-D-Man-(1-&gt;4)-beta-D-GlcNAc-(1-&gt;4)-alpha-D-GlcNAc)-L-asparaginyl-[protein] + H2O = an oligosaccharide-(1-&gt;3)-[oligosaccharide-(1-&gt;6)]-beta-D-Man-(1-&gt;4)-D-GlcNAc + N(4)-(N-acetyl-beta-D-glucosaminyl)-L-asparaginyl-[protein]. In terms of biological role, plays an important role in cell wall degradation and cell separation. The protein is Putative endo-beta-N-acetylglucosaminidase (lytB) of Streptococcus pneumoniae (strain ATCC BAA-255 / R6).